The following is a 525-amino-acid chain: Nucleolar complex protein 4 homolog (525 aa).

3 consecutive transmembrane segments (helical) span residues 305-325 (AAYD…FVPI), 356-376 (FFHL…LVAA), and 384-404 (LSLT…CNLI).

It belongs to the CBF/MAK21 family.

The protein localises to the nucleus membrane. It localises to the nucleus. Its subcellular location is the nucleolus. The sequence is that of Nucleolar complex protein 4 homolog (noc4l) from Danio rerio (Zebrafish).